The primary structure comprises 402 residues: Olfactomedin-like protein 1 (402 aa).

The signal sequence occupies residues 1-28 (MMVALRGASALLVLFLAAFLPPPQCTQD). The N-linked (GlcNAc...) asparagine glycan is linked to asparagine 66. A coiled-coil region spans residues 79–133 (SEYKSAVGNLALRVERAQREIDYIQYLREADECIESEDKTLAEMLLQEAEEEKKI). Residues asparagine 138 and asparagine 183 are each glycosylated (N-linked (GlcNAc...) asparagine). An Olfactomedin-like domain is found at 140–397 (SCDNMLMGIK…QIIYKLQTKR (258 aa)). Cysteines 141 and 324 form a disulfide.

In terms of processing, highly N-glycosylated. In terms of tissue distribution, mainly expressed in the small intestine, liver, lung and heart.

The protein resides in the secreted. The protein is Olfactomedin-like protein 1 (OLFML1) of Homo sapiens (Human).